A 291-amino-acid polypeptide reads, in one-letter code: Pantothenate synthetase (291 aa).

ATP is bound at residue M30–H37. H37 functions as the Proton donor in the catalytic mechanism. Q61 is a (R)-pantoate binding site. Q61 contacts beta-alanine. Residue G147–D150 participates in ATP binding. Q153 serves as a coordination point for (R)-pantoate. ATP-binding positions include V176 and C184–R187.

This sequence belongs to the pantothenate synthetase family. Homodimer.

It is found in the cytoplasm. The enzyme catalyses (R)-pantoate + beta-alanine + ATP = (R)-pantothenate + AMP + diphosphate + H(+). The protein operates within cofactor biosynthesis; (R)-pantothenate biosynthesis; (R)-pantothenate from (R)-pantoate and beta-alanine: step 1/1. Functionally, catalyzes the condensation of pantoate with beta-alanine in an ATP-dependent reaction via a pantoyl-adenylate intermediate. The protein is Pantothenate synthetase of Sinorhizobium medicae (strain WSM419) (Ensifer medicae).